A 705-amino-acid polypeptide reads, in one-letter code: Prolyl endopeptidase (705 aa).

Residues 1 to 20 (MKYKKLSVAVAAFAFAAVSA) form the signal peptide. Catalysis depends on charge relay system residues Ser556 and His675.

It belongs to the peptidase S9A family. Monomer.

It localises to the periplasm. It carries out the reaction Hydrolysis of Pro-|-Xaa &gt;&gt; Ala-|-Xaa in oligopeptides.. Functionally, cleaves peptide bonds on the C-terminal side of prolyl residues within peptides that are up to approximately 30 amino acids long. Has an absolute requirement for an X-Pro bond in the trans configuration immediately preceding the Pro-Y scissible bond. This Elizabethkingia miricola (Chryseobacterium miricola) protein is Prolyl endopeptidase.